A 738-amino-acid chain; its full sequence is Zinc finger protein 235 (738 aa).

A KRAB domain is found at Val-8–Ser-79. The segment at Tyr-263–His-285 adopts a C2H2-type 1; degenerate zinc-finger fold. C2H2-type zinc fingers lie at residues Tyr-319–His-341, Tyr-347–His-369, Tyr-375–His-397, Tyr-403–His-425, Tyr-431–His-453, Tyr-459–His-481, Tyr-487–His-509, Phe-515–His-537, Tyr-543–His-565, Tyr-571–His-593, Phe-599–His-621, Tyr-627–His-649, Phe-655–His-677, Tyr-683–His-705, and Tyr-711–His-733.

This sequence belongs to the krueppel C2H2-type zinc-finger protein family.

The protein resides in the nucleus. Its function is as follows. May be involved in transcriptional regulation. The sequence is that of Zinc finger protein 235 (ZNF235) from Homo sapiens (Human).